The primary structure comprises 227 residues: Orotidine 5'-phosphate decarboxylase (227 aa).

Substrate contacts are provided by residues Asp-8, Lys-30, 59–68, Thr-118, Arg-178, Gln-187, Gly-207, and Arg-208; that span reads DLKLYDIPNT. Residue Lys-61 is the Proton donor of the active site.

The protein belongs to the OMP decarboxylase family. Type 1 subfamily. As to quaternary structure, homodimer.

The catalysed reaction is orotidine 5'-phosphate + H(+) = UMP + CO2. The protein operates within pyrimidine metabolism; UMP biosynthesis via de novo pathway; UMP from orotate: step 2/2. In terms of biological role, catalyzes the decarboxylation of orotidine 5'-monophosphate (OMP) to uridine 5'-monophosphate (UMP). This is Orotidine 5'-phosphate decarboxylase from Sulfurimonas denitrificans (strain ATCC 33889 / DSM 1251) (Thiomicrospira denitrificans (strain ATCC 33889 / DSM 1251)).